A 257-amino-acid chain; its full sequence is NAD-capped RNA hydrolase NudC (257 aa).

R69 is a substrate binding site. Zn(2+) is bound by residues C98 and C101. E111 contacts substrate. Residues C116 and C119 each contribute to the Zn(2+) site. Y124 serves as a coordination point for substrate. In terms of domain architecture, Nudix hydrolase spans 125–248; that stretch reads PQIAPCIIVA…TVARRLIEDT (124 aa). A divalent metal cation-binding residues include A158, E174, and E178. Positions 159–180 match the Nudix box motif; that stretch reads GFVEVGETLEQAVAREVMEESG. Residue 192-199 coordinates substrate; that stretch reads QPWPFPQS. E219 serves as a coordination point for a divalent metal cation. Residue A241 coordinates substrate.

The protein belongs to the Nudix hydrolase family. NudC subfamily. Homodimer. Mg(2+) serves as cofactor. Requires Mn(2+) as cofactor. It depends on Zn(2+) as a cofactor.

It carries out the reaction a 5'-end NAD(+)-phospho-ribonucleoside in mRNA + H2O = a 5'-end phospho-adenosine-phospho-ribonucleoside in mRNA + beta-nicotinamide D-ribonucleotide + 2 H(+). It catalyses the reaction NAD(+) + H2O = beta-nicotinamide D-ribonucleotide + AMP + 2 H(+). The enzyme catalyses NADH + H2O = reduced beta-nicotinamide D-ribonucleotide + AMP + 2 H(+). In terms of biological role, mRNA decapping enzyme that specifically removes the nicotinamide adenine dinucleotide (NAD) cap from a subset of mRNAs by hydrolyzing the diphosphate linkage to produce nicotinamide mononucleotide (NMN) and 5' monophosphate mRNA. The NAD-cap is present at the 5'-end of some mRNAs and stabilizes RNA against 5'-processing. Has preference for mRNAs with a 5'-end purine. Catalyzes the hydrolysis of a broad range of dinucleotide pyrophosphates. The polypeptide is NAD-capped RNA hydrolase NudC (Salmonella typhimurium (strain LT2 / SGSC1412 / ATCC 700720)).